Consider the following 459-residue polypeptide: Elongation factor 1-alpha 1 (459 aa).

Residues 5 to 242 (KTHINIVVIG…DCIIPPQRPT (238 aa)) form the tr-type G domain. Residues 14 to 21 (GHVDSGKS) form a G1 region. The G2 stretch occupies residues 70–74 (GITID). The G3 stretch occupies residues 91–94 (DAPG). The segment at 153-156 (NKMD) is G4. The tract at residues 194–196 (SGF) is G5. A 5-glutamyl glycerylphosphorylethanolamine mark is found at E301 and E374.

This sequence belongs to the TRAFAC class translation factor GTPase superfamily. Classic translation factor GTPase family. EF-Tu/EF-1A subfamily.

It is found in the cytoplasm. This protein promotes the GTP-dependent binding of aminoacyl-tRNA to the A-site of ribosomes during protein biosynthesis. In Oscheius tipulae, this protein is Elongation factor 1-alpha 1 (eft-1).